The primary structure comprises 596 residues: MKNIRNFSIIAHIDHGKSTLADRLIQECGAVSDREMSSQIMDTMDIEKERGITIKAQSVRLNYALNGQNFVLNLIDTPGHVDFSYEVSRSLASCEGALLVVDASQGVEAQTIANVYIALENNLEIIPVINKIDLPAADPARVKDEIEHIIGLDCSGAIEVSAKTGVGIKELLEAIITRIPAPNGDVSKPTKALIYDSWFDNYLGALALVRVYDGEISKNDEILVMGTGKKHIVLDLMYPNPIAPIKTKTLSAGEVGIVVLGLKNVSDVQVGDTITQSRNPLKEPVGGFERAKPFVFAGLYPIETDKFEDLRDALDKLKLNDSSISYEPETSVALGFGFRVGFLGLLHMEVVKERLEREFDLDLIATAPTVTYEVIQTDGLNLKIQNPSQLPPVNKIDSILEPYVKATIITPSEFLGNIITLLNNRRGIQTKMDYITTDRVLLEYDIPMNEIVMDFYDKLKSSTKGYASFDYEPSDYRVGDLVKLDVKVAGETVDALSIIVPESKAQTKGRDFVKAMKEIVPRQLFEVAIQASIGNKIIARETVKSMGKNVTAKCYGGDITRKRKLLEKQKEGKKRMKAIGKVNLPQEAFLSVLKID.

The region spanning 2-183 is the tr-type G domain; that stretch reads KNIRNFSIIA…AIITRIPAPN (182 aa). GTP contacts are provided by residues 14-19 and 130-133; these read DHGKST and NKID.

It belongs to the TRAFAC class translation factor GTPase superfamily. Classic translation factor GTPase family. LepA subfamily.

Its subcellular location is the cell inner membrane. The enzyme catalyses GTP + H2O = GDP + phosphate + H(+). Its function is as follows. Required for accurate and efficient protein synthesis under certain stress conditions. May act as a fidelity factor of the translation reaction, by catalyzing a one-codon backward translocation of tRNAs on improperly translocated ribosomes. Back-translocation proceeds from a post-translocation (POST) complex to a pre-translocation (PRE) complex, thus giving elongation factor G a second chance to translocate the tRNAs correctly. Binds to ribosomes in a GTP-dependent manner. This is Elongation factor 4 from Campylobacter concisus (strain 13826).